The sequence spans 341 residues: UDP-3-O-acylglucosamine N-acyltransferase (341 aa).

The active-site Proton acceptor is the His-239.

The protein belongs to the transferase hexapeptide repeat family. LpxD subfamily. As to quaternary structure, homotrimer.

It carries out the reaction a UDP-3-O-[(3R)-3-hydroxyacyl]-alpha-D-glucosamine + a (3R)-hydroxyacyl-[ACP] = a UDP-2-N,3-O-bis[(3R)-3-hydroxyacyl]-alpha-D-glucosamine + holo-[ACP] + H(+). The protein operates within bacterial outer membrane biogenesis; LPS lipid A biosynthesis. Functionally, catalyzes the N-acylation of UDP-3-O-acylglucosamine using 3-hydroxyacyl-ACP as the acyl donor. Is involved in the biosynthesis of lipid A, a phosphorylated glycolipid that anchors the lipopolysaccharide to the outer membrane of the cell. In Shewanella oneidensis (strain ATCC 700550 / JCM 31522 / CIP 106686 / LMG 19005 / NCIMB 14063 / MR-1), this protein is UDP-3-O-acylglucosamine N-acyltransferase.